A 416-amino-acid polypeptide reads, in one-letter code: Serine hydroxymethyltransferase (416 aa).

(6S)-5,6,7,8-tetrahydrofolate-binding positions include Leu-120 and 124–126 (GHL). Lys-230 is modified (N6-(pyridoxal phosphate)lysine). Residue Glu-246 coordinates (6S)-5,6,7,8-tetrahydrofolate.

It belongs to the SHMT family. As to quaternary structure, homodimer. It depends on pyridoxal 5'-phosphate as a cofactor.

It is found in the cytoplasm. The catalysed reaction is (6R)-5,10-methylene-5,6,7,8-tetrahydrofolate + glycine + H2O = (6S)-5,6,7,8-tetrahydrofolate + L-serine. The protein operates within one-carbon metabolism; tetrahydrofolate interconversion. Its pathway is amino-acid biosynthesis; glycine biosynthesis; glycine from L-serine: step 1/1. In terms of biological role, catalyzes the reversible interconversion of serine and glycine with tetrahydrofolate (THF) serving as the one-carbon carrier. This reaction serves as the major source of one-carbon groups required for the biosynthesis of purines, thymidylate, methionine, and other important biomolecules. Also exhibits THF-independent aldolase activity toward beta-hydroxyamino acids, producing glycine and aldehydes, via a retro-aldol mechanism. This Onion yellows phytoplasma (strain OY-M) protein is Serine hydroxymethyltransferase.